A 299-amino-acid chain; its full sequence is 4-diphosphocytidyl-2-C-methyl-D-erythritol kinase (299 aa).

Lysine 16 is a catalytic residue. 97 to 107 is a binding site for ATP; sequence PVASGIGGGSA. Aspartate 140 is a catalytic residue.

This sequence belongs to the GHMP kinase family. IspE subfamily.

The enzyme catalyses 4-CDP-2-C-methyl-D-erythritol + ATP = 4-CDP-2-C-methyl-D-erythritol 2-phosphate + ADP + H(+). It functions in the pathway isoprenoid biosynthesis; isopentenyl diphosphate biosynthesis via DXP pathway; isopentenyl diphosphate from 1-deoxy-D-xylulose 5-phosphate: step 3/6. Functionally, catalyzes the phosphorylation of the position 2 hydroxy group of 4-diphosphocytidyl-2C-methyl-D-erythritol. This chain is 4-diphosphocytidyl-2-C-methyl-D-erythritol kinase, found in Roseobacter denitrificans (strain ATCC 33942 / OCh 114) (Erythrobacter sp. (strain OCh 114)).